The following is a 390-amino-acid chain: 23S rRNA (uracil(747)-C(5))-methyltransferase RlmC (390 aa).

Residues Cys12, Cys20, Cys23, and Cys100 each coordinate [4Fe-4S] cluster. Residues Gln225, Phe254, Glu275, and Asn322 each contribute to the S-adenosyl-L-methionine site. Cys349 (nucleophile) is an active-site residue.

It belongs to the class I-like SAM-binding methyltransferase superfamily. RNA M5U methyltransferase family. RlmC subfamily.

It carries out the reaction uridine(747) in 23S rRNA + S-adenosyl-L-methionine = 5-methyluridine(747) in 23S rRNA + S-adenosyl-L-homocysteine + H(+). Functionally, catalyzes the formation of 5-methyl-uridine at position 747 (m5U747) in 23S rRNA. This chain is 23S rRNA (uracil(747)-C(5))-methyltransferase RlmC, found in Shewanella baltica (strain OS223).